We begin with the raw amino-acid sequence, 368 residues long: Aminomethyltransferase (368 aa).

This sequence belongs to the GcvT family. In terms of assembly, the glycine cleavage system is composed of four proteins: P, T, L and H.

The catalysed reaction is N(6)-[(R)-S(8)-aminomethyldihydrolipoyl]-L-lysyl-[protein] + (6S)-5,6,7,8-tetrahydrofolate = N(6)-[(R)-dihydrolipoyl]-L-lysyl-[protein] + (6R)-5,10-methylene-5,6,7,8-tetrahydrofolate + NH4(+). In terms of biological role, the glycine cleavage system catalyzes the degradation of glycine. This chain is Aminomethyltransferase, found in Alkaliphilus oremlandii (strain OhILAs) (Clostridium oremlandii (strain OhILAs)).